The following is a 366-amino-acid chain: MMQPIKKIAILTGGGDCPGLNAVIRAVTRTAILKYGYEVIGYKFGYRGLYNNDFVKLDLDSVSGILHRGGTILHSSNKDNLFDYQVEDENGKIVKKDVSDVGVENLKKEGVDALVVIGGDGTLTSARDFSRKGVNVIGVPKTIDNDLLATDVTFGFNTATEIATEALDRLHTTAESHHRIMLLEVMGRNAGWIALESGIAGSADVILLPEIPYDINKIVEKVKEREEAGKQFTIIVVAEGAKPKDGEVVVSKIVDDSPDPIRLGGIANKLAIDLEGLIKNHEIRSTVLGHIQRGGNTSTYDRILSTKYGVKAVELINSNLFGNMVALKGNKVSYESLENVIGHTKNVDPEGELVNTAKSIGISFAD.

ATP contacts are provided by residues G15, K78–D79, and G119–T122. Residue D120 participates in Mg(2+) binding. Residues T142–D144, R179, M186–R188, E239, R284, and H290–R293 each bind substrate. The active-site Proton acceptor is the D144.

The protein belongs to the phosphofructokinase type A (PFKA) family. Mixed-substrate PFK group III subfamily. In terms of assembly, homodimer or homotetramer. Mg(2+) is required as a cofactor.

The protein localises to the cytoplasm. The enzyme catalyses beta-D-fructose 6-phosphate + ATP = beta-D-fructose 1,6-bisphosphate + ADP + H(+). It functions in the pathway carbohydrate degradation; glycolysis; D-glyceraldehyde 3-phosphate and glycerone phosphate from D-glucose: step 3/4. With respect to regulation, subject to allosteric activation by ADP and other diphosphonucleosides, and inhibition by phosphoenolpyruvate. In terms of biological role, catalyzes the phosphorylation of D-fructose 6-phosphate to fructose 1,6-bisphosphate by ATP, the first committing step of glycolysis. This is ATP-dependent 6-phosphofructokinase 2 from Clostridium perfringens (strain 13 / Type A).